Consider the following 208-residue polypeptide: MEIKLIDKNGRPAKAGLAVSEATFGREFNEALVHQVVVAYQANARTATRAQLTRAEVSHTTKKPWNQKGTGRARAGMSSSTIWRGGGRAFPNTPDENFSHKINRKAYRAGVRSILSELVRQDRLSAVEEFAVDTPKTKQLVEKIKGLGYNEGLLVLVDKFDENLYLSARNLPHVLVLEAQYVDPVSLVRFPQVLATAGAVKKLEEMLA.

The segment at 54 to 78 (RAEVSHTTKKPWNQKGTGRARAGMS) is disordered.

The protein belongs to the universal ribosomal protein uL4 family. Part of the 50S ribosomal subunit.

Its function is as follows. One of the primary rRNA binding proteins, this protein initially binds near the 5'-end of the 23S rRNA. It is important during the early stages of 50S assembly. It makes multiple contacts with different domains of the 23S rRNA in the assembled 50S subunit and ribosome. Forms part of the polypeptide exit tunnel. This chain is Large ribosomal subunit protein uL4, found in Methylobacillus flagellatus (strain ATCC 51484 / DSM 6875 / VKM B-1610 / KT).